We begin with the raw amino-acid sequence, 131 residues long: D-ribose pyranase (131 aa).

Histidine 20 functions as the Proton donor in the catalytic mechanism. Substrate contacts are provided by residues aspartate 28, histidine 98, and 120–122; that span reads FSN.

It belongs to the RbsD / FucU family. RbsD subfamily. As to quaternary structure, homodecamer.

It localises to the cytoplasm. It carries out the reaction beta-D-ribopyranose = beta-D-ribofuranose. The protein operates within carbohydrate metabolism; D-ribose degradation; D-ribose 5-phosphate from beta-D-ribopyranose: step 1/2. Catalyzes the interconversion of beta-pyran and beta-furan forms of D-ribose. This Levilactobacillus brevis (strain ATCC 367 / BCRC 12310 / CIP 105137 / JCM 1170 / LMG 11437 / NCIMB 947 / NCTC 947) (Lactobacillus brevis) protein is D-ribose pyranase.